Reading from the N-terminus, the 188-residue chain is Elongation factor P (188 aa).

This sequence belongs to the elongation factor P family.

Its subcellular location is the cytoplasm. It functions in the pathway protein biosynthesis; polypeptide chain elongation. Functionally, involved in peptide bond synthesis. Stimulates efficient translation and peptide-bond synthesis on native or reconstituted 70S ribosomes in vitro. Probably functions indirectly by altering the affinity of the ribosome for aminoacyl-tRNA, thus increasing their reactivity as acceptors for peptidyl transferase. The protein is Elongation factor P of Rickettsia akari (strain Hartford).